A 149-amino-acid polypeptide reads, in one-letter code: MEKSLIILKPDAVQRGLIGPILTRLEARGLKFIGIKLSQVSSELAHKHYGVHEGKPFFAGLVSYITSGPVLVVAVEGKDVIEIVRSTVGATNPVKAAPGTIRGDFGVNIGRNLIHASDSPENGDHEVALFFSSEELIRSERSVDQWITE.

ATP contacts are provided by lysine 9, phenylalanine 57, arginine 85, threonine 91, arginine 102, and asparagine 112. Catalysis depends on histidine 115, which acts as the Pros-phosphohistidine intermediate.

The protein belongs to the NDK family. Homotetramer. It depends on Mg(2+) as a cofactor.

It is found in the cytoplasm. It carries out the reaction a 2'-deoxyribonucleoside 5'-diphosphate + ATP = a 2'-deoxyribonucleoside 5'-triphosphate + ADP. The catalysed reaction is a ribonucleoside 5'-diphosphate + ATP = a ribonucleoside 5'-triphosphate + ADP. Functionally, major role in the synthesis of nucleoside triphosphates other than ATP. The ATP gamma phosphate is transferred to the NDP beta phosphate via a ping-pong mechanism, using a phosphorylated active-site intermediate. This is Nucleoside diphosphate kinase from Herpetosiphon aurantiacus (strain ATCC 23779 / DSM 785 / 114-95).